Here is an 882-residue protein sequence, read N- to C-terminus: Translation initiation factor IF-2 (882 aa).

Disordered stretches follow at residues 67-202 (KTVS…EKAR) and 223-278 (ERYG…KHMK). Composition is skewed to basic and acidic residues over residues 95-152 (VKRD…EAKA) and 161-202 (EQPK…EKAR). A compositionally biased stretch (basic residues) spans 251–264 (GRRNRNKTQTKSKR). Residues 265–274 (GGKDAREGRE) show a composition bias toward basic and acidic residues. The 170-residue stretch at 382–551 (PRAPVVTIMG…LLQAEVLELK (170 aa)) folds into the tr-type G domain. The G1 stretch occupies residues 391 to 398 (GHVDHGKT). 391–398 (GHVDHGKT) is a GTP binding site. Residues 416 to 420 (GITQH) are G2. The tract at residues 437–440 (DTPG) is G3. GTP contacts are provided by residues 437-441 (DTPGH) and 491-494 (NKMD). Positions 491–494 (NKMD) are G4. The G5 stretch occupies residues 527-529 (SAK).

The protein belongs to the TRAFAC class translation factor GTPase superfamily. Classic translation factor GTPase family. IF-2 subfamily.

The protein resides in the cytoplasm. One of the essential components for the initiation of protein synthesis. Protects formylmethionyl-tRNA from spontaneous hydrolysis and promotes its binding to the 30S ribosomal subunits. Also involved in the hydrolysis of GTP during the formation of the 70S ribosomal complex. This Shewanella amazonensis (strain ATCC BAA-1098 / SB2B) protein is Translation initiation factor IF-2.